An 89-amino-acid chain; its full sequence is Small ribosomal subunit protein uS15 (89 aa).

Belongs to the universal ribosomal protein uS15 family. Part of the 30S ribosomal subunit. Forms a bridge to the 50S subunit in the 70S ribosome, contacting the 23S rRNA.

One of the primary rRNA binding proteins, it binds directly to 16S rRNA where it helps nucleate assembly of the platform of the 30S subunit by binding and bridging several RNA helices of the 16S rRNA. Its function is as follows. Forms an intersubunit bridge (bridge B4) with the 23S rRNA of the 50S subunit in the ribosome. This is Small ribosomal subunit protein uS15 from Erwinia tasmaniensis (strain DSM 17950 / CFBP 7177 / CIP 109463 / NCPPB 4357 / Et1/99).